The following is a 173-amino-acid chain: Alpha-crystallin A chain (173 aa).

Met1 carries the N-acetylmethionine modification. The tract at residues 1–63 is required for complex formation with BFSP1 and BFSP2; the sequence is MDVTIQHPWF…RTVLDSGVSE (63 aa). Gln6 bears the Deamidated glutamine; partial mark. The residue at position 45 (Ser45) is a Phosphoserine. The residue at position 50 (Gln50) is a Deamidated glutamine; partial. The sHSP domain occupies 52–162; that stretch reads LFRTVLDSGV…GHSERAIPVS (111 aa). N6-acetyllysine is present on Lys70. Position 90 is a deamidated glutamine; partial (Gln90). Lys99 carries the N6-acetyllysine modification. His100 serves as a coordination point for Zn(2+). Asn101 carries the post-translational modification Deamidated asparagine; partial. Zn(2+) is bound by residues Glu102 and His107. The residue at position 122 (Ser122) is a Phosphoserine. Deamidated asparagine; partial is present on Asn123. The interval 144 to 173 is disordered; that stretch reads PKVQSGLDAGHSERAIPVSREEKPSSAPSS. Gln147 carries the deamidated glutamine; partial modification. A compositionally biased stretch (basic and acidic residues) spans 153 to 167; that stretch reads GHSERAIPVSREEKP. His154 provides a ligand contact to Zn(2+). A glycan (O-linked (GlcNAc) serine) is linked at Ser162.

It belongs to the small heat shock protein (HSP20) family. As to quaternary structure, heteromer composed of three CRYAA and one CRYAB subunits. Inter-subunit bridging via zinc ions enhances stability, which is crucial as there is no protein turn over in the lens. Can also form homodimers and homotetramers (dimers of dimers) which serve as the building blocks of homooligomers. Within homooligomers, the zinc-binding motif is created from residues of 3 different molecules. His-100 and Glu-102 from one molecule are ligands of the zinc ion, and His-107 and His-154 residues from additional molecules complete the site with tetrahedral coordination geometry. Part of a complex required for lens intermediate filament formation composed of BFSP1, BFSP2 and CRYAA. Post-translationally, acetylation at Lys-70 may increase chaperone activity. Undergoes age-dependent proteolytical cleavage at the C-terminus.

The protein resides in the cytoplasm. It is found in the nucleus. Functionally, contributes to the transparency and refractive index of the lens. Acts as a chaperone, preventing aggregation of various proteins under a wide range of stress conditions. Required for the correct formation of lens intermediate filaments as part of a complex composed of BFSP1, BFSP2 and CRYAA. The polypeptide is Alpha-crystallin A chain (CRYAA) (Otolemur crassicaudatus (Brown greater galago)).